Reading from the N-terminus, the 715-residue chain is Elongation factor G (715 aa).

The tr-type G domain occupies 8-290; the sequence is NRYRNIGICA…AVIDFLPAPT (283 aa). GTP is bound by residues 17 to 24, 88 to 92, and 142 to 145; these read AHVDAGKT, DTPGH, and NKMD.

The protein belongs to the TRAFAC class translation factor GTPase superfamily. Classic translation factor GTPase family. EF-G/EF-2 subfamily.

It localises to the cytoplasm. Catalyzes the GTP-dependent ribosomal translocation step during translation elongation. During this step, the ribosome changes from the pre-translocational (PRE) to the post-translocational (POST) state as the newly formed A-site-bound peptidyl-tRNA and P-site-bound deacylated tRNA move to the P and E sites, respectively. Catalyzes the coordinated movement of the two tRNA molecules, the mRNA and conformational changes in the ribosome. In Pseudomonas fluorescens (strain ATCC BAA-477 / NRRL B-23932 / Pf-5), this protein is Elongation factor G.